The following is a 178-amino-acid chain: Small ribosomal subunit protein uS5 (178 aa).

The region spanning 15–78 is the S5 DRBM domain; that stretch reads FEEKIIEIRR…ADAKKNVIEV (64 aa).

Belongs to the universal ribosomal protein uS5 family. As to quaternary structure, part of the 30S ribosomal subunit. Contacts proteins S4 and S8.

Functionally, with S4 and S12 plays an important role in translational accuracy. Its function is as follows. Located at the back of the 30S subunit body where it stabilizes the conformation of the head with respect to the body. The sequence is that of Small ribosomal subunit protein uS5 from Thermotoga neapolitana (strain ATCC 49049 / DSM 4359 / NBRC 107923 / NS-E).